We begin with the raw amino-acid sequence, 192 residues long: uncharacterized protein (192 aa).

The protein to R.meliloti RA0936 and y4nF.

This is an uncharacterized protein from Sinorhizobium fredii (strain NBRC 101917 / NGR234).